Reading from the N-terminus, the 167-residue chain is MNYTSFIFAFQLCIILCSSGYYCQAMFFKEIEELKGYFNASNPDVADGGSLFVDILKNWKEESDKTIIQSQIVSFYLKMFENLKDDDQRIQRSMDTIKEDMLDKLLNTSSSKRDDFLKLIQIPVNDLQVQRKAINELFKVMNDLSPRSNLRKRKRSQNLFRGRRASK.

The signal sequence occupies residues 1-23 (MNYTSFIFAFQLCIILCSSGYYC). Q24 bears the Pyrrolidone carboxylic acid mark. N-linked (GlcNAc...) asparagine glycans are attached at residues N39 and N107.

This sequence belongs to the type II (or gamma) interferon family. Homodimer. Interacts with IFNGR1 (via extracellular domain); this interaction promotes IFNGR1 dimerization. As to expression, released primarily from activated T lymphocytes.

It localises to the secreted. Type II interferon produced by immune cells such as T-cells and NK cells that plays crucial roles in antimicrobial, antiviral, and antitumor responses by activating effector immune cells and enhancing antigen presentation. Primarily signals through the JAK-STAT pathway after interaction with its receptor IFNGR1 to affect gene regulation. Upon IFNG binding, IFNGR1 intracellular domain opens out to allow association of downstream signaling components JAK2, JAK1 and STAT1, leading to STAT1 activation, nuclear translocation and transcription of IFNG-regulated genes. Many of the induced genes are transcription factors such as IRF1 that are able to further drive regulation of a next wave of transcription. Plays a role in class I antigen presentation pathway by inducing a replacement of catalytic proteasome subunits with immunoproteasome subunits. In turn, increases the quantity, quality, and repertoire of peptides for class I MHC loading. Increases the efficiency of peptide generation also by inducing the expression of activator PA28 that associates with the proteasome and alters its proteolytic cleavage preference. Up-regulates as well MHC II complexes on the cell surface by promoting expression of several key molecules such as cathepsins B/CTSB, H/CTSH, and L/CTSL. Participates in the regulation of hematopoietic stem cells during development and under homeostatic conditions by affecting their development, quiescence, and differentiation. This is Interferon gamma (IFNG) from Felis catus (Cat).